Consider the following 659-residue polypeptide: ATP-binding cassette sub-family D member 3 (659 aa).

Residues 1–61 (MAAFSKYLTA…GKKERAVVDK (61 aa)) form an interaction with PEX19 region. N-linked (GlcNAc...) asparagine glycosylation occurs at Asn-12. Lys-61 carries the post-translational modification N6-acetyllysine. The chain crosses the membrane as a helical span at residues 84 to 104 (GYLVLIAVMLVSRTYCDVWMI). The 288-residue stretch at 85 to 372 (YLVLIAVMLV…MLLRMSQALG (288 aa)) folds into the ABC transmembrane type-1 domain. Asn-106 carries an N-linked (GlcNAc...) asparagine glycan. Residues 126–146 (LLNFIAAMPLISLVNNFLKYG) form a helical membrane-spanning segment. Asn-206 carries N-linked (GlcNAc...) asparagine glycosylation. Residues 224 to 244 (AIGAQGPASMMAYLVVSGLFL) traverse the membrane as a helical segment. Residue Lys-260 is modified to N6-acetyllysine. A helical transmembrane segment spans residues 313-333 (MGFIDSIIAKYLATVVGYLVV). N6-acetyllysine is present on Lys-399. Residues 440–659 (IKFDHVPLAT…ITEDTVEFGS (220 aa)) form the ABC transporter domain. 473–480 (GPNGCGKS) is a binding site for ATP. Lys-533 carries the post-translational modification N6-acetyllysine. The residue at position 659 (Ser-659) is a Phosphoserine.

This sequence belongs to the ABC transporter superfamily. ABCD family. Peroxisomal fatty acyl CoA transporter (TC 3.A.1.203) subfamily. As to quaternary structure, homodimers. Can form heterodimers with ABCD1 and ABCD2. Dimerization is necessary to form an active transporter. Interacts with PEX19; mediates the targeting of ABCD3 to peroxisomes. In terms of processing, ubiquitinated by PEX2 during pexophagy in response to starvation, leading to its degradation.

Its subcellular location is the peroxisome membrane. It catalyses the reaction a very long-chain fatty acyl-CoA + H2O = a very long-chain fatty acid + CoA + H(+). The enzyme catalyses a very long-chain fatty acid(in) + ATP + H2O = a very long-chain fatty acid(out) + ADP + phosphate + H(+). The catalysed reaction is a long-chain fatty acyl-CoA + H2O = a long-chain fatty acid + CoA + H(+). It carries out the reaction a long-chain fatty acid(in) + ATP + H2O = a long-chain fatty acid(out) + ADP + phosphate + H(+). It catalyses the reaction pristanoyl-CoA + H2O = 2,6,10,14-tetramethylpentadecanoate + CoA + H(+). The enzyme catalyses 2,6,10,14-tetramethylpentadecanoate(in) + ATP + H2O = 2,6,10,14-tetramethylpentadecanoate(out) + ADP + phosphate + H(+). The catalysed reaction is hexadecanedioyl-CoA + H2O = hexadecanedioate + CoA + H(+). It carries out the reaction hexadecanedioate(in) + ATP + H2O = hexadecanedioate(out) + ADP + phosphate + H(+). It catalyses the reaction (5Z,8Z,11Z,14Z,17Z)-eicosapentaenoyl-CoA + H2O = (5Z,8Z,11Z,14Z,17Z)-eicosapentaenoate + CoA + H(+). The enzyme catalyses (5Z,8Z,11Z,14Z,17Z)-eicosapentaenoate(in) + ATP + H2O = (5Z,8Z,11Z,14Z,17Z)-eicosapentaenoate(out) + ADP + phosphate + H(+). The catalysed reaction is (4Z,7Z,10Z,13Z,16Z,19Z)-docosahexaenoyl-CoA + H2O = (4Z,7Z,10Z,13Z,16Z,19Z)-docosahexaenoate + CoA + H(+). It carries out the reaction (4Z,7Z,10Z,13Z,16Z,19Z)-docosahexaenoate(in) + ATP + H2O = (4Z,7Z,10Z,13Z,16Z,19Z)-docosahexaenoate(out) + ADP + phosphate + H(+). Functionally, broad substrate specificity ATP-dependent transporter of the ATP-binding cassette (ABC) family that catalyzes the transport of long-chain fatty acids (LCFA)-CoA, dicarboxylic acids-CoA, long-branched-chain fatty acids-CoA and bile acids from the cytosol to the peroxisome lumen for beta-oxydation. Has fatty acyl-CoA thioesterase and ATPase activities. Probably hydrolyzes fatty acyl-CoAs into free fatty acids prior to their ATP-dependent transport into peroxisomes. Thus, play a role in regulation of LCFAs and energy metabolism namely, in the degradation and biosynthesis of fatty acids by beta-oxidation. This is ATP-binding cassette sub-family D member 3 from Homo sapiens (Human).